The following is a 447-amino-acid chain: SNF1-related protein kinase regulatory subunit gamma-1-like (447 aa).

Alanine 2 carries the post-translational modification N-acetylalanine. Serine 35 carries the post-translational modification Phosphoserine. 4 consecutive CBS domains span residues 54 to 120 (QVPG…SAEL), 214 to 275 (SFRW…GRDW), 292 to 350 (MSPN…PEVF), and 374 to 433 (LAIP…PNYF).

This sequence belongs to the 5'-AMP-activated protein kinase gamma subunit family. Subunit of a probable heterotrimeric complex consisting of an alpha catalytic (KIN10 or KIN11) subunit, and a beta (KINB) and a gamma (KING or SNF4) non-catalytic regulatory subunits.

Functionally, regulatory subunit of the probable trimeric SNF1-related protein kinase (SnRK) complex, which may play a role in a signal transduction cascade regulating gene expression and carbohydrate metabolism in higher plants. This Arabidopsis thaliana (Mouse-ear cress) protein is SNF1-related protein kinase regulatory subunit gamma-1-like (CBSCBS2).